We begin with the raw amino-acid sequence, 205 residues long: Nucleoside triphosphate pyrophosphatase (205 aa).

The active-site Proton acceptor is the Asp76.

It belongs to the Maf family. A divalent metal cation is required as a cofactor.

It is found in the cytoplasm. The enzyme catalyses a ribonucleoside 5'-triphosphate + H2O = a ribonucleoside 5'-phosphate + diphosphate + H(+). It catalyses the reaction a 2'-deoxyribonucleoside 5'-triphosphate + H2O = a 2'-deoxyribonucleoside 5'-phosphate + diphosphate + H(+). Nucleoside triphosphate pyrophosphatase. May have a dual role in cell division arrest and in preventing the incorporation of modified nucleotides into cellular nucleic acids. The protein is Nucleoside triphosphate pyrophosphatase of Orientia tsutsugamushi (strain Boryong) (Rickettsia tsutsugamushi).